The following is a 103-amino-acid chain: Mitochondrial import inner membrane translocase subunit Tim10 B (103 aa).

The short motif at 28 to 52 is the Twin CX3C motif element; the sequence is CFQRCVPSLHHRALDAEEEACLHSC. Cystine bridges form between cysteine 28-cysteine 52 and cysteine 32-cysteine 48.

This sequence belongs to the small Tim family. Component of the TIM22 complex, which core is composed of TIMM22, associated with TIMM10 (TIMM10A and/or TIMM10B), TIMM9, AGK and TIMM29. In terms of tissue distribution, ubiquitous, with highest expression in heart, kidney, liver and skeletal muscle.

The protein localises to the mitochondrion inner membrane. Component of the TIM22 complex, a complex that mediates the import and insertion of multi-pass transmembrane proteins into the mitochondrial inner membrane. The TIM22 complex forms a twin-pore translocase that uses the membrane potential as the external driving force. In the TIM22 complex, it may act as a docking point for the soluble 70 kDa complex that guides the target proteins in transit through the aqueous mitochondrial intermembrane space. The polypeptide is Mitochondrial import inner membrane translocase subunit Tim10 B (TIMM10B) (Homo sapiens (Human)).